Reading from the N-terminus, the 381-residue chain is Gas vesicle protein C (381 aa).

7 tandem repeats follow at residues 22 to 59 (QAFAAYADEFAADVDDKRDVSELVDGIDTLRTEMNSTN), 60 to 84 (DAFRAYSEEFAADVEHFHTSVADRR), 85 to 122 (DAFDAYADIFATDVAEMQDVSDLLAAIDDLRAEMDETH), 123 to 160 (EAFDAYADAFVTDVATLRDVSDLLTAISELQSEFVSVQ), 161 to 192 (GEFNGYASEFGADIDQFHAVVAEKRDGHKDVA), 193 to 232 (DAFLQYREEFHGVEVQSLLDNIAAFQREMGDYRKAFETTE), and 233 to 274 (EAFA…IPPI). Residues 22-274 (QAFAAYADEF…TETEVDIPPI (253 aa)) form a 7 X approximate tandem repeats region. A disordered region spans residues 261–333 (AVTGTETEVD…EDDQFLDDET (73 aa)). Residues 276–318 (DSVEPDGEDEDSKADDVEAEAEVETVEMEFGAEMDTEADEDVQ) show a composition bias toward acidic residues.

Belongs to the halobacterial gas vesicle GvpC family. Detected as 2 slightly different sizes in vivo; the proteins appears larger in SDS-PAGE probably due to the acidic tail.

It localises to the gas vesicle. In terms of biological role, confers stability, involved in shaping gas vesicles (GV), hollow, gas filled proteinaceous nanostructures found in some microorganisms. They allow positioning of halobacteria at the optimal depth for growth in the poorly aerated, shallow brine pools of their habitat. Expression of a 9.5 kb mc-vac DNA fragment containing 2 divergently transcribed regions (gvpD-gvpE-gvpF-gvpG-gvpH-gvpI-gvpJ-gvpK-gvpL-gvpM and gvpA-gvpC-gvpN-gvpO) allows H.volcanii to produce gas vesicles. This is Gas vesicle protein C from Haloferax mediterranei (strain ATCC 33500 / DSM 1411 / JCM 8866 / NBRC 14739 / NCIMB 2177 / R-4) (Halobacterium mediterranei).